A 640-amino-acid chain; its full sequence is MSKSVNASLSSAINSVTLVKQENLKENLQNGSAVSVGSSESSNHSMKEISLDYSSPSLQQTEEQDRELNFIDSSMLRPTPPQESDNRLAVEKPNIQPLQGHSPVPSFMSTASTNISSSKINNNQTEFEQLRDSYKSHGDLNSAINDSRIQSIIFELNQQCEKESIPVSNIDWLQWASVPLFAYDLPPDPSNPNATSSSPPPLTPILELIKQNNFCIPSPCRKLVWQSLVSAERNELLTLYATLSTTNNSLDSSIRKIIRMQSFRGPLEPFKYSSTTRHKVSTESIFHVLHAFTLFDTTVEYNIEPLLWLTCAFLSYMAQGNAFRSLVCFIQRGGIREFFISQSSSLDESLFALVWGCLGDLAPSVAISLQRIKVSSLCILYPSLACCFADSLQLPEALRLMDLIAIYGLEMFVRLLVAIFLKDRDKIVNMVSHEQWVKYLRSDVLASYRQPLVQKYTFYTRTPVDLNAWVEDSLALNIDTTQFPSYLSYHETSVSHNTYRQNNLEELKNQNDYLTSQITNLEEGMVMLNKENTKLSEALSNHRVTRSEMEEATEILKNNSADLKAQLEKQPQELENRLLQEISILKQRNQKFLKNNATSIQQIQYLDEELGKTLKQLNDLKEKHAQLQTKWKSVSEMFRN.

The tract at residues 96-120 is disordered; sequence QPLQGHSPVPSFMSTASTNISSSKI. Residues 109 to 120 show a composition bias toward low complexity; sequence STASTNISSSKI. The Rab-GAP TBC domain maps to 215–408; the sequence is CIPSPCRKLV…RLMDLIAIYG (194 aa). A coiled-coil region spans residues 500-636; that stretch reads RQNNLEELKN…LQTKWKSVSE (137 aa).

The protein belongs to the GYP5 family.

The protein localises to the nucleus. It is found in the cytoplasm. The polypeptide is Putative GTPase-activating protein C1620.12c (Schizosaccharomyces pombe (strain 972 / ATCC 24843) (Fission yeast)).